We begin with the raw amino-acid sequence, 373 residues long: tRNA pseudouridine synthase Pus10 (373 aa).

The active-site Nucleophile is aspartate 197. The substrate site is built by tyrosine 265 and tyrosine 336.

Belongs to the pseudouridine synthase Pus10 family.

The catalysed reaction is uridine(54) in tRNA = pseudouridine(54) in tRNA. It carries out the reaction uridine(55) in tRNA = pseudouridine(55) in tRNA. In terms of biological role, responsible for synthesis of pseudouridine from uracil-54 and uracil-55 in the psi GC loop of transfer RNAs. This chain is tRNA pseudouridine synthase Pus10, found in Korarchaeum cryptofilum (strain OPF8).